Reading from the N-terminus, the 758-residue chain is Relaxin receptor 1 (758 aa).

Residues 1–409 are Extracellular-facing; that stretch reads MTSGPFFFCI…ENLLASIIQR (409 aa). Residues 26–63 enclose the LDL-receptor class A domain; that stretch reads SCPLGSFPCGNMSRCLPQLLHCNGVDDCGNRADEDHCG. 3 disulfide bridges follow: Cys-27–Cys-40, Cys-34–Cys-53, and Cys-47–Cys-62. Residue Asn-36 is glycosylated (N-linked (GlcNAc...) asparagine). Positions 45, 48, 50, 52, 58, and 59 each coordinate Ca(2+). N-linked (GlcNAc...) asparagine glycosylation is present at Asn-127. 10 LRR repeats span residues 127–148, 151–172, 175–196, 199–220, 223–244, 248–269, 272–293, 296–317, 320–341, and 344–365; these read NVTV…GFRK, ELQK…AFRG, SLTK…VFED, RLEW…TFYG, SLIL…PLCQ, RLHW…TFIS, NLTV…AFTH, KLDE…IFKD, ELSQ…QFDC, and KLKS…MFRP. N-linked (GlcNAc...) asparagine glycans are attached at residues Asn-264 and Asn-272. Asn-325 carries an N-linked (GlcNAc...) asparagine glycan. N-linked (GlcNAc...) asparagine glycosylation occurs at Asn-368. Residues 410–430 form a helical membrane-spanning segment; that stretch reads VFVWVVSAITCFGNIFVICMR. Residues 431-443 lie on the Cytoplasmic side of the membrane; it reads PYIRSENKLHAMS. Residues 444 to 464 form a helical membrane-spanning segment; that stretch reads IISLCCADCLMGVYLFVIGAF. The Extracellular segment spans residues 465-486; the sequence is DLKFRGEYNKHAQPWMESVHCQ. Cys-485 and Cys-563 are oxidised to a cystine. The helical transmembrane segment at 487 to 507 threads the bilayer; the sequence is FMGSLAILSTEVSVLLLTFLT. The Cytoplasmic segment spans residues 508-527; it reads LEKYICIVYPFRCLRPRKCR. Residues 528–548 form a helical membrane-spanning segment; that stretch reads TITVLIFIWIIGFIVAFAPLG. Over 549-577 the chain is Extracellular; the sequence is NKEFFKNYYGTNGVCFPLHSEDTGSTGAQ. A helical transmembrane segment spans residues 578-598; sequence IYSVVIFLGINLVAFIIIVFS. Residues 599 to 629 lie on the Cytoplasmic side of the membrane; it reads YGSMFYSVHQSSVTVTEIQKQVKKEVVLAKR. The chain crosses the membrane as a helical span at residues 630–650; it reads FFFIVFTDALCWIPIFILKFL. Position 651 (Ser-651) is a topological domain, extracellular. Residues 652-672 traverse the membrane as a helical segment; it reads LLQVEIPDSITSWVVIFILPI. Residues 673–758 lie on the Cytoplasmic side of the membrane; sequence NSALNPIIYT…SQSSRLNSYS (86 aa).

The protein belongs to the G-protein coupled receptor 1 family. In terms of assembly, interacts with C1QTNF8.

Its subcellular location is the cell membrane. Functionally, receptor for relaxins. The activity of this receptor is mediated by G proteins leading to stimulation of adenylate cyclase and an increase of cAMP. Binding of the ligand may also activate a tyrosine kinase pathway that inhibits the activity of a phosphodiesterase that degrades cAMP. The chain is Relaxin receptor 1 (Rxfp1) from Mus musculus (Mouse).